A 354-amino-acid polypeptide reads, in one-letter code: MNSMSTTGPIRVAAIPKHYLQFTVRTYTRSMASAGLRYSNPPLVKKCYDQPTGKRFISSTPQSQIKDYFPPPDAPKIVEVKTAWAHPVYSEEEMRAVTVGHREAKNWSDWVALGSVRLLRWGMDLVTGYKHPAPGQEDIKKFQMTEKEWLRRFVFLESVAGVPGMVGGMLRHLRSLRRMKRDNGWIETLLEEAYNERMHLLTFLKMAEPGWFMRLMVLGAQGVFFNGFFLSYLISPRTCHRFVGYLEEEAVLTYTRAIKDLESGRLPHWEKLEAPEIAVKYWKMPEGNRTMKDLLLYVRADEAKHREVNHTLGNLKQAVDVNPFAVEWKDPSKPHPGKGIKHLKTTGWEREEVV.

A mitochondrion-targeting transit peptide spans methionine 1–glutamine 64. A helical transmembrane segment spans residues phenylalanine 153–leucine 173. Fe cation contacts are provided by glutamate 157, glutamate 196, and histidine 199. Residues leucine 215–serine 235 form a helical membrane-spanning segment. The Fe cation site is built by glutamate 247, glutamate 302, and histidine 305. Positions lysine 333–valine 354 are disordered. The segment covering histidine 335–lysine 344 has biased composition (basic residues).

This sequence belongs to the alternative oxidase family. The cofactor is Fe cation.

The protein localises to the mitochondrion inner membrane. Catalyzes cyanide-resistant oxygen consumption. May increase respiration when the cytochrome respiratory pathway is restricted, or in response to low temperatures. In Emericella nidulans (strain FGSC A4 / ATCC 38163 / CBS 112.46 / NRRL 194 / M139) (Aspergillus nidulans), this protein is Alternative oxidase, mitochondrial (alxA).